Here is a 387-residue protein sequence, read N- to C-terminus: S-adenosylmethionine synthase (387 aa).

His15 provides a ligand contact to ATP. Asp17 contributes to the Mg(2+) binding site. Glu43 lines the K(+) pocket. Residues Glu56 and Gln99 each coordinate L-methionine. Residues 99 to 109 (QSPDIAQGVNR) form a flexible loop region. ATP contacts are provided by residues 166 to 168 (DAK), 232 to 233 (RF), Asp241, 247 to 248 (RK), Ala264, and Lys268. L-methionine is bound at residue Asp241. Lys272 is an L-methionine binding site.

It belongs to the AdoMet synthase family. Homotetramer; dimer of dimers. Mg(2+) serves as cofactor. The cofactor is K(+).

It localises to the cytoplasm. The enzyme catalyses L-methionine + ATP + H2O = S-adenosyl-L-methionine + phosphate + diphosphate. Its pathway is amino-acid biosynthesis; S-adenosyl-L-methionine biosynthesis; S-adenosyl-L-methionine from L-methionine: step 1/1. Its function is as follows. Catalyzes the formation of S-adenosylmethionine (AdoMet) from methionine and ATP. The overall synthetic reaction is composed of two sequential steps, AdoMet formation and the subsequent tripolyphosphate hydrolysis which occurs prior to release of AdoMet from the enzyme. The chain is S-adenosylmethionine synthase from Nitrosomonas europaea (strain ATCC 19718 / CIP 103999 / KCTC 2705 / NBRC 14298).